A 259-amino-acid chain; its full sequence is Protein-tyrosine phosphatase RolB (259 aa).

The segment at 219-259 (GISRPAASSPEPDLTLRLSGPDQEGEEGVMKPAAVNLKKEA) is disordered.

The catalysed reaction is O-phospho-L-tyrosyl-[protein] + H2O = L-tyrosyl-[protein] + phosphate. Induces differentiation and growth of neoplastic roots (hairy roots). Seems to function as a tyrosine phosphatase. In Rhizobium rhizogenes (Agrobacterium rhizogenes), this protein is Protein-tyrosine phosphatase RolB (rolB).